The following is a 264-amino-acid chain: Glutamate racemase (264 aa).

Residues 10 to 11 (DS) and 42 to 43 (YG) each bind substrate. The active-site Proton donor/acceptor is the cysteine 73. 74–75 (NT) provides a ligand contact to substrate. The active-site Proton donor/acceptor is the cysteine 181. 182–183 (TH) provides a ligand contact to substrate.

Belongs to the aspartate/glutamate racemases family.

The enzyme catalyses L-glutamate = D-glutamate. It functions in the pathway cell wall biogenesis; peptidoglycan biosynthesis. Functionally, provides the (R)-glutamate required for cell wall biosynthesis. The chain is Glutamate racemase from Thermoanaerobacter pseudethanolicus (strain ATCC 33223 / 39E) (Clostridium thermohydrosulfuricum).